The following is a 422-amino-acid chain: Glucuronoxylanase XynC (422 aa).

Positions 1 to 32 are cleaved as a signal peptide; it reads MIPRIKKTICVLLVCFTMLSVMLGPGATEVLA. The Proton donor role is filled by Glu-171. The active-site Nucleophile is Glu-260.

The protein belongs to the glycosyl hydrolase 30 family.

It localises to the secreted. It carries out the reaction Endohydrolysis of (1-&gt;4)-beta-D-xylosyl links in some glucuronoarabinoxylans.. It functions in the pathway glycan degradation; xylan degradation. In terms of biological role, catalyzes the depolymerization of methylglucuronoxylan (MeGAXn) from different sources. It cleaves the beta-1,4-xylosidic bond penultimate to that linking carbon one of the xylose residue substituted with alpha-1,2-linked 4-O-methyl-D-glucuronate (MeGA). In Bacillus subtilis (strain 168), this protein is Glucuronoxylanase XynC (xynC).